The primary structure comprises 392 residues: NAD(P)H-quinone oxidoreductase subunit H (392 aa).

This sequence belongs to the complex I 49 kDa subunit family. As to quaternary structure, NDH-1 can be composed of about 15 different subunits; different subcomplexes with different compositions have been identified which probably have different functions.

The protein resides in the cellular thylakoid membrane. The enzyme catalyses a plastoquinone + NADH + (n+1) H(+)(in) = a plastoquinol + NAD(+) + n H(+)(out). It catalyses the reaction a plastoquinone + NADPH + (n+1) H(+)(in) = a plastoquinol + NADP(+) + n H(+)(out). NDH-1 shuttles electrons from an unknown electron donor, via FMN and iron-sulfur (Fe-S) centers, to quinones in the respiratory and/or the photosynthetic chain. The immediate electron acceptor for the enzyme in this species is believed to be plastoquinone. Couples the redox reaction to proton translocation, and thus conserves the redox energy in a proton gradient. Cyanobacterial NDH-1 also plays a role in inorganic carbon-concentration. This is NAD(P)H-quinone oxidoreductase subunit H from Synechococcus sp. (strain JA-2-3B'a(2-13)) (Cyanobacteria bacterium Yellowstone B-Prime).